Here is a 341-residue protein sequence, read N- to C-terminus: Dihydroorotate dehydrogenase (quinone) (341 aa).

FMN is bound by residues 61 to 65 (AGLDK) and Thr-85. Lys-65 is a substrate binding site. Residue 110-114 (NRMGF) coordinates substrate. Residues Asn-138 and Asn-171 each coordinate FMN. Asn-171 is a substrate binding site. The active-site Nucleophile is Ser-174. Asn-176 lines the substrate pocket. FMN is bound by residues Lys-216 and Thr-244. 245-246 (NT) provides a ligand contact to substrate. FMN-binding positions include Gly-267, Gly-296, and 317-318 (YS).

It belongs to the dihydroorotate dehydrogenase family. Type 2 subfamily. In terms of assembly, monomer. It depends on FMN as a cofactor.

The protein resides in the cell membrane. It catalyses the reaction (S)-dihydroorotate + a quinone = orotate + a quinol. Its pathway is pyrimidine metabolism; UMP biosynthesis via de novo pathway; orotate from (S)-dihydroorotate (quinone route): step 1/1. Functionally, catalyzes the conversion of dihydroorotate to orotate with quinone as electron acceptor. In Pseudomonas putida (strain W619), this protein is Dihydroorotate dehydrogenase (quinone).